Consider the following 544-residue polypeptide: Matrilin-1 (544 aa).

A signal peptide spans Met1–Gly26. The 176-residue stretch at Asp42–Phe217 folds into the VWFA 1 domain. The N-linked (GlcNAc...) asparagine glycan is linked to Asn77. Residues Val224 to Asn264 enclose the EGF-like domain. Intrachain disulfides connect Cys228–Cys239, Cys235–Cys248, and Cys250–Cys263. In terms of domain architecture, VWFA 2 spans Asp276 to Leu448. An N-linked (GlcNAc...) asparagine glycan is attached at Asn345.

In terms of assembly, homotrimer. Part of a complex composed of MATN1 (via VWFA1 domain), type 2 collagens and type 6 collagens. Forms a complex (via covalent bonds) with ACAN; the interaction increases in abundance with increasing age of the organism via an increase in occupancy of MATN1 binding sites. Interacts with COMP. Post-translationally, N-glycosylated; reduces binding affinity for type 2 collagens. As to expression, expressed in trachea from fetus into adulthood (at protein level).

It localises to the secreted. It is found in the extracellular space. Its subcellular location is the extracellular matrix. In terms of biological role, a major component of the extracellular matrix of non-articular cartilage. Binds to type 2 collagens and forms long concatenated protein networks as part of the extracellular matrix. Required for the network-like organization and bundling of collagen fibrils surrounding chondrocytes in the zones of maturation and hypertrophy. Required for mechanotransduction and adaption to mechanical loading in cartilage chondrocytes, resulting in an increase in expression of the extracellular matrix components ACAN and COL2A1. Acts as a moderator of angiogenesis in response to injury. This is Matrilin-1 from Bos taurus (Bovine).